Consider the following 366-residue polypeptide: MSLYIGLMSGTSMDGIDAALLELPSNHLIHGITKQYSDDVRRNLDDLIMGNHLTLASICQLNTLIGREFAEAVRQLLSEIKVHPKEIQAIGSHGQTVCHDTSGNIPYTLQLGCGHTISSLTGITVVADFRTRDLVNGGQGAPFAPLYHQQIFSKVNESVAVVNIGGIANVTFIAKNQMTRGWDIGPGNCLMDAWIYKNKGALFDKSGVWASQGEVIYPLLEYLLQDPFFHLDSPKSIGKEYFSLSWLQKHLKPDYTPADIQATLLALTAHTIAETILNESGEIKQLYLCGGGAHNTHLKENLARLLPGIAVKSIAELGISPDYLEAMMFAWLAAQTINQIPVNLTSITGAKGIAILGAVYPIIKSY.

ATP is bound at residue 10 to 17 (GTSMDGID).

Belongs to the anhydro-N-acetylmuramic acid kinase family.

The catalysed reaction is 1,6-anhydro-N-acetyl-beta-muramate + ATP + H2O = N-acetyl-D-muramate 6-phosphate + ADP + H(+). It participates in amino-sugar metabolism; 1,6-anhydro-N-acetylmuramate degradation. It functions in the pathway cell wall biogenesis; peptidoglycan recycling. In terms of biological role, catalyzes the specific phosphorylation of 1,6-anhydro-N-acetylmuramic acid (anhMurNAc) with the simultaneous cleavage of the 1,6-anhydro ring, generating MurNAc-6-P. Is required for the utilization of anhMurNAc either imported from the medium or derived from its own cell wall murein, and thus plays a role in cell wall recycling. This chain is Anhydro-N-acetylmuramic acid kinase, found in Legionella pneumophila subsp. pneumophila (strain Philadelphia 1 / ATCC 33152 / DSM 7513).